The sequence spans 165 residues: Phosphopantetheine adenylyltransferase (165 aa).

A substrate-binding site is contributed by Ser8. ATP-binding positions include 8–9 (SF) and His16. Substrate is bound by residues Lys40, Thr72, and Arg86. ATP contacts are provided by residues 87 to 89 (GLR), Glu97, and 122 to 128 (YSFLSSS).

Belongs to the bacterial CoaD family. Homohexamer. Mg(2+) serves as cofactor.

The protein resides in the cytoplasm. The catalysed reaction is (R)-4'-phosphopantetheine + ATP + H(+) = 3'-dephospho-CoA + diphosphate. The protein operates within cofactor biosynthesis; coenzyme A biosynthesis; CoA from (R)-pantothenate: step 4/5. Reversibly transfers an adenylyl group from ATP to 4'-phosphopantetheine, yielding dephospho-CoA (dPCoA) and pyrophosphate. The protein is Phosphopantetheine adenylyltransferase of Synechococcus sp. (strain WH7803).